The chain runs to 501 residues: MDYDFKAKLAAERERVEDLFEYEGCKVGRGTYGHVYKARRKDGKDEKEYALKQIEGTGISMSACREIALLRELKHPNVIALQKVFLSHSDRKVWLLFDYAEHDLWHIIKFHRASKANKKPMQLPRSMVKSLLYQILDGIHYLHANWVLHRDLKPANILVMGEGPERGRVKIADMGFARLFNSPLKPLADLDPVVVTFWYRAPELLLGARHYTKAIDIWAIGCIFAELLTSEPIFHCRQEDIKTSNPFHHDQLDRIFSVMGFPADKDWEDIRKMPEYPTLQKDFRRTTYANSSLIKYMEKHKVKPDSKVFLLLQKLLTMDPTKRITSEQALQDPYFQEDPLPTLDVFAGCQIPYPKREFLNEDEPEEKGDKNQPQQQNPHQQPAAPAQQTAAPPQAPPPQQSSAQTNGTAGGATAGGGGAGAGLQHSQDPGLNQVPPNKKPRIGPSGANSGGPVMPSDYQHSSSRLNYQSSVQGSSQSQSTLGYSSSQQSTQYHSSHQTHRY.

Methionine 1 carries the N-acetylmethionine modification. In terms of domain architecture, Protein kinase spans 21 to 335 (EYEGCKVGRG…SEQALQDPYF (315 aa)). ATP contacts are provided by residues 27–35 (VGRGTYGHV) and lysine 52. Catalysis depends on aspartate 151, which acts as the Proton acceptor. Residues 362–501 (DEPEEKGDKN…YHSSHQTHRY (140 aa)) form a disordered region. Positions 371–392 (NQPQQQNPHQQPAAPAQQTAAP) are enriched in low complexity. Residues 408–421 (TAGGATAGGGGAGA) show a composition bias toward gly residues. Position 449 is a phosphoserine (serine 449). The segment covering 467–495 (YQSSVQGSSQSQSTLGYSSSQQSTQYHSS) has biased composition (low complexity).

It belongs to the protein kinase superfamily. CMGC Ser/Thr protein kinase family. CDC2/CDKX subfamily.

It localises to the cytoplasm. It is found in the perinuclear region. The protein localises to the nucleus. The catalysed reaction is L-seryl-[protein] + ATP = O-phospho-L-seryl-[protein] + ADP + H(+). It catalyses the reaction L-threonyl-[protein] + ATP = O-phospho-L-threonyl-[protein] + ADP + H(+). In Mus musculus (Mouse), this protein is Cyclin-dependent kinase 19 (Cdk19).